Consider the following 196-residue polypeptide: Protein GrpE (196 aa).

Residues 1–40 (MSSKEQKTPEGQAPEEIIMDQHEEVEAVEPNDSAEQVDPR) form a disordered region.

The protein belongs to the GrpE family. Homodimer.

The protein localises to the cytoplasm. Functionally, participates actively in the response to hyperosmotic and heat shock by preventing the aggregation of stress-denatured proteins, in association with DnaK and GrpE. It is the nucleotide exchange factor for DnaK and may function as a thermosensor. Unfolded proteins bind initially to DnaJ; upon interaction with the DnaJ-bound protein, DnaK hydrolyzes its bound ATP, resulting in the formation of a stable complex. GrpE releases ADP from DnaK; ATP binding to DnaK triggers the release of the substrate protein, thus completing the reaction cycle. Several rounds of ATP-dependent interactions between DnaJ, DnaK and GrpE are required for fully efficient folding. This Salmonella enteritidis PT4 (strain P125109) protein is Protein GrpE.